We begin with the raw amino-acid sequence, 606 residues long: 4-hydroxy-3-methylbut-2-en-1-yl diphosphate synthase (flavodoxin) (606 aa).

[4Fe-4S] cluster-binding residues include Cys513, Cys516, Cys547, and Glu554.

It belongs to the IspG family. Requires [4Fe-4S] cluster as cofactor.

It catalyses the reaction (2E)-4-hydroxy-3-methylbut-2-enyl diphosphate + oxidized [flavodoxin] + H2O + 2 H(+) = 2-C-methyl-D-erythritol 2,4-cyclic diphosphate + reduced [flavodoxin]. It participates in isoprenoid biosynthesis; isopentenyl diphosphate biosynthesis via DXP pathway; isopentenyl diphosphate from 1-deoxy-D-xylulose 5-phosphate: step 5/6. Converts 2C-methyl-D-erythritol 2,4-cyclodiphosphate (ME-2,4cPP) into 1-hydroxy-2-methyl-2-(E)-butenyl 4-diphosphate. The polypeptide is 4-hydroxy-3-methylbut-2-en-1-yl diphosphate synthase (flavodoxin) (Chlamydia abortus (strain DSM 27085 / S26/3) (Chlamydophila abortus)).